Reading from the N-terminus, the 333-residue chain is Ketol-acid reductoisomerase (NADP(+)) (333 aa).

The 181-residue stretch at 2-182 (AKIYYDEDAS…GATRAGVIET (181 aa)) folds into the KARI N-terminal Rossmann domain. Residues 25–28 (YGSQ), S51, S53, and 83–86 (DTVQ) each bind NADP(+). The active site involves H108. G134 is an NADP(+) binding site. The 145-residue stretch at 183 to 327 (TFKEETETDL…EELRKMMPWL (145 aa)) folds into the KARI C-terminal knotted domain. D191, E195, E227, and E231 together coordinate Mg(2+). S252 contributes to the substrate binding site.

Belongs to the ketol-acid reductoisomerase family. It depends on Mg(2+) as a cofactor.

The catalysed reaction is (2R)-2,3-dihydroxy-3-methylbutanoate + NADP(+) = (2S)-2-acetolactate + NADPH + H(+). It catalyses the reaction (2R,3R)-2,3-dihydroxy-3-methylpentanoate + NADP(+) = (S)-2-ethyl-2-hydroxy-3-oxobutanoate + NADPH + H(+). The protein operates within amino-acid biosynthesis; L-isoleucine biosynthesis; L-isoleucine from 2-oxobutanoate: step 2/4. It functions in the pathway amino-acid biosynthesis; L-valine biosynthesis; L-valine from pyruvate: step 2/4. Functionally, involved in the biosynthesis of branched-chain amino acids (BCAA). Catalyzes an alkyl-migration followed by a ketol-acid reduction of (S)-2-acetolactate (S2AL) to yield (R)-2,3-dihydroxy-isovalerate. In the isomerase reaction, S2AL is rearranged via a Mg-dependent methyl migration to produce 3-hydroxy-3-methyl-2-ketobutyrate (HMKB). In the reductase reaction, this 2-ketoacid undergoes a metal-dependent reduction by NADPH to yield (R)-2,3-dihydroxy-isovalerate. The polypeptide is Ketol-acid reductoisomerase (NADP(+)) (Aquifex aeolicus (strain VF5)).